The primary structure comprises 499 residues: uncharacterized protein (499 aa).

The RING-type; degenerate zinc finger occupies 10–57 (CGICGQEYSEDEKLLIPRILTECGHTICTGCAGKIKGQSSIIACPFDR). A B box-type; degenerate zinc finger spans residues 101 to 147 (NKNGVCDENTNHHASNYCETCDADLCEECWTWIHSISTLAHHEKKMI).

This is an uncharacterized protein from Caenorhabditis elegans.